Reading from the N-terminus, the 189-residue chain is Nuclear distribution protein nudE homolog 1 (189 aa).

The stretch at 4-121 (NLDLETAIQI…LRVSKEEATS (118 aa)) forms a coiled coil. Over residues 114–126 (VSKEEATSGETRR) the composition is skewed to basic and acidic residues. The segment at 114-139 (VSKEEATSGETRRNTRSLPSQNKKMK) is disordered.

It belongs to the nudE family. As to quaternary structure, self-associates. Interacts with PAC1.

Its subcellular location is the nucleus. The protein localises to the cytoplasm. It localises to the cytoskeleton. Its function is as follows. Required for nuclear migration to the bud neck during cell division. Targets cytoplasmic dynein to microtubule plus ends thereby promoting dynein-mediated microtubule sliding along the bud cortex and consequently the movement of the mitotic spindle to the bud neck. The polypeptide is Nuclear distribution protein nudE homolog 1 (NDL1) (Saccharomyces cerevisiae (strain ATCC 204508 / S288c) (Baker's yeast)).